A 668-amino-acid polypeptide reads, in one-letter code: L-type lectin-domain containing receptor kinase I.7 (668 aa).

An N-terminal signal peptide occupies residues 1 to 21; that stretch reads MIRGLLLGIIWMIFCVCSSFQ. Residues 22 to 285 lie on the Extracellular side of the membrane; sequence QETPFVYNNF…SSTKKKSTSP (264 aa). Residues 24 to 256 are legume-lectin like; it reads TPFVYNNFGH…YQYILGWSFS (233 aa). Asn56, Asn125, Asn167, Asn201, and Asn223 each carry an N-linked (GlcNAc...) asparagine glycan. A helical membrane pass occupies residues 286-306; the sequence is VLSVLLGLIAFIVLGILVVAY. Topologically, residues 307-668 are cytoplasmic; it reads LYRRNLYSEV…THSVLYGSGR (362 aa). The region spanning 341–620 is the Protein kinase domain; sequence FNRSEFLGRG…LNGNLALPEF (280 aa). Residues 347 to 355 and Lys372 contribute to the ATP site; that span reads LGRGGFGEV. Asp468 acts as the Proton acceptor in catalysis.

In the C-terminal section; belongs to the protein kinase superfamily. Ser/Thr protein kinase family. The protein in the N-terminal section; belongs to the leguminous lectin family.

The protein localises to the cell membrane. The catalysed reaction is L-seryl-[protein] + ATP = O-phospho-L-seryl-[protein] + ADP + H(+). It catalyses the reaction L-threonyl-[protein] + ATP = O-phospho-L-threonyl-[protein] + ADP + H(+). Functionally, involved in resistance response to the pathogenic oomycetes Phytophthora infestans and Phytophthora capsici. The protein is L-type lectin-domain containing receptor kinase I.7 of Arabidopsis thaliana (Mouse-ear cress).